Consider the following 211-residue polypeptide: Prolactin (211 aa).

A signal peptide spans 1–24 (MTHRRTKLFMMAAVVSYVMTSCGA). 2 cysteine pairs are disulfide-bonded: Cys-70–Cys-184 and Cys-201–Cys-211.

It belongs to the somatotropin/prolactin family.

The protein localises to the secreted. In Paralichthys olivaceus (Bastard halibut), this protein is Prolactin (prl).